Reading from the N-terminus, the 311-residue chain is uncharacterized protein (311 aa).

The next 10 helical transmembrane spans lie at 13–33 (STAV…GFFS), 41–61 (FELV…CWLA), 76–96 (LQTL…FKSF), 103–123 (IAIS…SFFY), 128–148 (NVIS…ISGI), 157–177 (LMGS…FTTL), 192–212 (FLQT…GAFA), 218–238 (NWIM…LLFF), 248–268 (FISI…TVFT), and 272–292 (PDLY…LTLV). EamA domains are found at residues 24–147 (VIFG…LISG) and 166–292 (VLAA…LTLV).

The protein belongs to the EamA transporter family.

It is found in the cell membrane. This is an uncharacterized protein from Bacillus subtilis (strain 168).